The primary structure comprises 799 residues: Mitochondrial intermediate peptidase (799 aa).

Histidine 562 contacts Zn(2+). Glutamate 563 is a catalytic residue. Residues histidine 566 and histidine 569 each contribute to the Zn(2+) site.

The protein belongs to the peptidase M3 family. Zn(2+) is required as a cofactor.

The protein resides in the mitochondrion matrix. The catalysed reaction is Release of an N-terminal octapeptide as second stage of processing of some proteins imported into the mitochondrion.. Its function is as follows. Cleaves proteins, imported into the mitochondrion, to their mature size. While most mitochondrial precursor proteins are processed to the mature form in one step by mitochondrial processing peptidase (MPP), the sequential cleavage by MIP of an octapeptide after initial processing by MPP is a required step for a subgroup of nuclear-encoded precursor proteins destined for the matrix or the inner membrane. The polypeptide is Mitochondrial intermediate peptidase (oct1) (Aspergillus niger (strain ATCC MYA-4892 / CBS 513.88 / FGSC A1513)).